The primary structure comprises 873 residues: Calmodulin-dependent glutamylase SidJ (873 aa).

A disordered region spans residues 16–90; the sequence is QSEDNPSETA…TTSTTKQKGP (75 aa). Residues 22–58 are compositionally biased toward polar residues; it reads SETAVETTDVSTKIKTTDTTQEESSVKTKTVVPTQPG. Residues Asp542 and Asp545 each contribute to the Mg(2+) site. Residues 851–873 are disordered; that stretch reads NLSEKSDIDSEKPESERTTDKRL.

Interacts with host calmodulin/CALM1; this interaction is required for glutamylase activity. The cofactor is Mg(2+).

The enzyme catalyses L-glutamyl-[protein] + L-glutamate + ATP = gamma-L-glutamyl-L-glutamyl-[protein] + ADP + phosphate + H(+). It carries out the reaction (L-glutamyl)(n)-gamma-L-glutamyl-L-glutamyl-[protein] + L-glutamate + ATP = (L-glutamyl)(n+1)-gamma-L-glutamyl-L-glutamyl-[protein] + ADP + phosphate + H(+). Glytamylation catalyzed by SidJ requires host calmodulin and can be regulated by intracellular changes in Ca2+ concentrations. Also requires ATP. Functionally, glutamylase that mediates the covalent attachment of glutamate moieties to SdeA on one of the catalytic residues that is required for its mono-ADP-ribosyltransferase activity. In turn, inhibits SdeA ubiquitinating activity. Also glutamylates related SdeB, SdeC and SidE. Glutamylase activity only occurs in the host since it requires host calmodulin. May also reverse the SdeA-mediated substrate ubiquitination by cleaving the phosphodiester bond that links phosphoribosylated ubiquitin to protein substrates via its deubiquitinase activity. This Legionella pneumophila subsp. pneumophila (strain Philadelphia 1 / ATCC 33152 / DSM 7513) protein is Calmodulin-dependent glutamylase SidJ.